Consider the following 271-residue polypeptide: N-acetylaspartate synthetase (271 aa).

A disordered region spans residues 1 to 38; sequence MTYRGTRKSPCCSPPPRCGPPLPSGPAGSALGPPSSGA. Positions 12-24 are enriched in pro residues; sequence CSPPPRCGPPLPS. The segment covering 25-37 has biased composition (low complexity); that stretch reads GPAGSALGPPSSG. The helical transmembrane segment at 89–109 threads the bilayer; it reads VYAVIIIMCFVVTKSLLVTCC. One can recognise an N-acetyltransferase domain in the interval 115 to 258; that stretch reads LGMRYYYSRK…HSLLERLFFQ (144 aa).

This sequence belongs to the NAT8 family.

Its subcellular location is the cytoplasm. The protein localises to the microsome membrane. It localises to the mitochondrion membrane. The protein resides in the endoplasmic reticulum membrane. It catalyses the reaction L-aspartate + acetyl-CoA = N-acetyl-L-aspartate + CoA + H(+). Catalyzes the synthesis of N-acetylaspartate acid (NAA) from L-aspartate and acetyl-CoA. This is N-acetylaspartate synthetase (nat8l) from Xenopus tropicalis (Western clawed frog).